The chain runs to 281 residues: Elongation factor 1-delta (281 aa).

Ala-2 bears the N-acetylalanine mark. Lys-17 is modified (N6-acetyllysine). Phosphoserine is present on residues Ser-37, Ser-44, Ser-60, Ser-86, and Ser-106. The leucine-zipper stretch occupies residues Leu-80–Leu-115. At Lys-107 the chain carries N6-acetyllysine. Over residues Leu-115–Val-132 the composition is skewed to polar residues. The segment at Leu-115 to Ala-172 is disordered. An N6-acetyllysine; alternate modification is found at Lys-117. Lys-117 bears the N6-succinyllysine; alternate mark. Phosphoserine is present on Ser-119. Phosphothreonine is present on Thr-129. Ser-133 carries the phosphoserine modification. Thr-147 carries the phosphothreonine modification. Residues Ala-149–Lys-169 are compositionally biased toward acidic residues. Ser-162 is subject to Phosphoserine; by CK2. The tract at residues Arg-173–Ile-281 is catalytic (GEF).

It belongs to the EF-1-beta/EF-1-delta family. EF-1 is composed of 4 subunits: alpha, beta, delta isoform 1, and gamma. Isoform 2 interacts with HSF1 and NFE2L2.

Its subcellular location is the nucleus. In terms of biological role, EF-1-beta and EF-1-delta stimulate the exchange of GDP bound to EF-1-alpha to GTP, regenerating EF-1-alpha for another round of transfer of aminoacyl-tRNAs to the ribosome. Regulates induction of heat-shock-responsive genes through association with heat shock transcription factors and direct DNA-binding at heat shock promoter elements (HSE). In Rattus norvegicus (Rat), this protein is Elongation factor 1-delta (Eef1d).